A 191-amino-acid chain; its full sequence is Shikimate kinase (191 aa).

14–19 (GSGKST) is an ATP binding site. Serine 18 lines the Mg(2+) pocket. Aspartate 36, arginine 60, and glycine 82 together coordinate substrate. Position 120 (arginine 120) interacts with ATP. A substrate-binding site is contributed by arginine 147.

Belongs to the shikimate kinase family. In terms of assembly, monomer. Requires Mg(2+) as cofactor.

The protein resides in the cytoplasm. It catalyses the reaction shikimate + ATP = 3-phosphoshikimate + ADP + H(+). It functions in the pathway metabolic intermediate biosynthesis; chorismate biosynthesis; chorismate from D-erythrose 4-phosphate and phosphoenolpyruvate: step 5/7. Functionally, catalyzes the specific phosphorylation of the 3-hydroxyl group of shikimic acid using ATP as a cosubstrate. This chain is Shikimate kinase, found in Chlorobaculum tepidum (strain ATCC 49652 / DSM 12025 / NBRC 103806 / TLS) (Chlorobium tepidum).